Reading from the N-terminus, the 253-residue chain is Phosphoglycerate mutase 2 (253 aa).

At threonine 3 the chain carries Phosphothreonine. Substrate-binding positions include 10 to 17 (RHGESTWN), 23 to 24 (CG), arginine 62, 89 to 92 (ERHY), lysine 100, and 116 to 117 (RR). The Tele-phosphohistidine intermediate role is filled by histidine 11. Serine 14 bears the Phosphoserine mark. Glutamate 89 serves as the catalytic Proton donor/acceptor. A Phosphoserine modification is found at serine 118. Residues tyrosine 132 and tyrosine 133 each carry the phosphotyrosine modification. Serine 135 is modified (phosphoserine). Threonine 152 carries the phosphothreonine modification. 187–188 (GN) is a substrate binding site.

This sequence belongs to the phosphoglycerate mutase family. BPG-dependent PGAM subfamily. Homodimer. Interacts with ENO1. In terms of tissue distribution, expressed in the heart and muscle. Not found in the liver and brain.

The enzyme catalyses (2R)-2-phosphoglycerate = (2R)-3-phosphoglycerate. It carries out the reaction (2R)-3-phospho-glyceroyl phosphate = (2R)-2,3-bisphosphoglycerate + H(+). Its function is as follows. Interconversion of 3- and 2-phosphoglycerate with 2,3-bisphosphoglycerate as the primer of the reaction. Can also catalyze the reaction of EC 5.4.2.4 (synthase), but with a reduced activity. The protein is Phosphoglycerate mutase 2 (PGAM2) of Homo sapiens (Human).